Here is a 743-residue protein sequence, read N- to C-terminus: Phosphoribosylformylglycinamidine synthase subunit PurL (743 aa).

His54 is an active-site residue. Residues Tyr57 and Lys96 each contribute to the ATP site. Glu98 is a binding site for Mg(2+). Substrate contacts are provided by residues 99–102 (SHNH) and Arg121. Catalysis depends on His100, which acts as the Proton acceptor. Residue Asp122 participates in Mg(2+) binding. Gln245 is a substrate binding site. Asp273 is a binding site for Mg(2+). 317–319 (ESQ) is a substrate binding site. The ATP site is built by Asp500 and Gly537. Residue Asn538 coordinates Mg(2+). Ser540 contacts substrate.

Belongs to the FGAMS family. As to quaternary structure, monomer. Part of the FGAM synthase complex composed of 1 PurL, 1 PurQ and 2 PurS subunits.

It is found in the cytoplasm. It catalyses the reaction N(2)-formyl-N(1)-(5-phospho-beta-D-ribosyl)glycinamide + L-glutamine + ATP + H2O = 2-formamido-N(1)-(5-O-phospho-beta-D-ribosyl)acetamidine + L-glutamate + ADP + phosphate + H(+). It functions in the pathway purine metabolism; IMP biosynthesis via de novo pathway; 5-amino-1-(5-phospho-D-ribosyl)imidazole from N(2)-formyl-N(1)-(5-phospho-D-ribosyl)glycinamide: step 1/2. Its function is as follows. Part of the phosphoribosylformylglycinamidine synthase complex involved in the purines biosynthetic pathway. Catalyzes the ATP-dependent conversion of formylglycinamide ribonucleotide (FGAR) and glutamine to yield formylglycinamidine ribonucleotide (FGAM) and glutamate. The FGAM synthase complex is composed of three subunits. PurQ produces an ammonia molecule by converting glutamine to glutamate. PurL transfers the ammonia molecule to FGAR to form FGAM in an ATP-dependent manner. PurS interacts with PurQ and PurL and is thought to assist in the transfer of the ammonia molecule from PurQ to PurL. The polypeptide is Phosphoribosylformylglycinamidine synthase subunit PurL (Bacillus pumilus (strain SAFR-032)).